The chain runs to 684 residues: UvrABC system protein B (684 aa).

In terms of domain architecture, Helicase ATP-binding spans 30-188; that stretch reads EGVQRGDRWQ…QELVSLHYVR (159 aa). 43–50 is an ATP binding site; that stretch reads GVTGSGKT. Positions 96–119 match the Beta-hairpin motif; the sequence is YYDFYQPEAYLPALDKYIAKDLRI. A Helicase C-terminal domain is found at 435–601; it reads QIDDLLGEIR…SIIKSVEQVL (167 aa). The region spanning 641–676 is the UVR domain; it reads YSMAESLRLEMQEAALKMEYEKAAYLRDEITKFEHR.

Belongs to the UvrB family. In terms of assembly, forms a heterotetramer with UvrA during the search for lesions. Interacts with UvrC in an incision complex.

Its subcellular location is the cytoplasm. In terms of biological role, the UvrABC repair system catalyzes the recognition and processing of DNA lesions. A damage recognition complex composed of 2 UvrA and 2 UvrB subunits scans DNA for abnormalities. Upon binding of the UvrA(2)B(2) complex to a putative damaged site, the DNA wraps around one UvrB monomer. DNA wrap is dependent on ATP binding by UvrB and probably causes local melting of the DNA helix, facilitating insertion of UvrB beta-hairpin between the DNA strands. Then UvrB probes one DNA strand for the presence of a lesion. If a lesion is found the UvrA subunits dissociate and the UvrB-DNA preincision complex is formed. This complex is subsequently bound by UvrC and the second UvrB is released. If no lesion is found, the DNA wraps around the other UvrB subunit that will check the other stand for damage. The chain is UvrABC system protein B from Chlorobium limicola (strain DSM 245 / NBRC 103803 / 6330).